The following is a 234-amino-acid chain: AA9 family lytic polysaccharide monooxygenase D (234 aa).

The signal sequence occupies residues 1–18; that stretch reads MRIEKLLNAALLAGAVSA. 2 residues coordinate Cu(2+): His19 and His95. Cys57 and Cys182 are disulfide-bonded. O2 is bound by residues His168 and Gln177. Tyr179 contributes to the Cu(2+) binding site.

The protein belongs to the polysaccharide monooxygenase AA9 family. It depends on Cu(2+) as a cofactor.

It is found in the secreted. It carries out the reaction [(1-&gt;4)-beta-D-glucosyl]n+m + reduced acceptor + O2 = 4-dehydro-beta-D-glucosyl-[(1-&gt;4)-beta-D-glucosyl]n-1 + [(1-&gt;4)-beta-D-glucosyl]m + acceptor + H2O.. Lytic polysaccharide monooxygenase (LPMO) that depolymerizes crystalline and amorphous polysaccharides via the oxidation of scissile alpha- or beta-(1-4)-glycosidic bonds, yielding C1 or C4 oxidation products. Catalysis by LPMOs requires the reduction of the active-site copper from Cu(II) to Cu(I) by a reducing agent and H(2)O(2) or O(2) as a cosubstrate. This Malbranchea cinnamomea (Thermophilic fungus) protein is AA9 family lytic polysaccharide monooxygenase D.